Reading from the N-terminus, the 569-residue chain is Proline--tRNA ligase (569 aa).

It belongs to the class-II aminoacyl-tRNA synthetase family. ProS type 1 subfamily. As to quaternary structure, homodimer.

It is found in the cytoplasm. It carries out the reaction tRNA(Pro) + L-proline + ATP = L-prolyl-tRNA(Pro) + AMP + diphosphate. In terms of biological role, catalyzes the attachment of proline to tRNA(Pro) in a two-step reaction: proline is first activated by ATP to form Pro-AMP and then transferred to the acceptor end of tRNA(Pro). As ProRS can inadvertently accommodate and process non-cognate amino acids such as alanine and cysteine, to avoid such errors it has two additional distinct editing activities against alanine. One activity is designated as 'pretransfer' editing and involves the tRNA(Pro)-independent hydrolysis of activated Ala-AMP. The other activity is designated 'posttransfer' editing and involves deacylation of mischarged Ala-tRNA(Pro). The misacylated Cys-tRNA(Pro) is not edited by ProRS. The protein is Proline--tRNA ligase of Dehalococcoides mccartyi (strain ATCC BAA-2100 / JCM 16839 / KCTC 5957 / BAV1).